We begin with the raw amino-acid sequence, 899 residues long: Valine--tRNA ligase (899 aa).

A 'HIGH' region motif is present at residues 60-70; that stretch reads PNVTGVLHMGH. A 'KMSKS' region motif is present at residues 539–543; that stretch reads KMSKS. Residue lysine 542 coordinates ATP. Positions 827 to 898 form a coiled coil; the sequence is AGLIDLDEEQ…KQGLEKLAAL (72 aa).

It belongs to the class-I aminoacyl-tRNA synthetase family. ValS type 1 subfamily. As to quaternary structure, monomer.

It localises to the cytoplasm. The enzyme catalyses tRNA(Val) + L-valine + ATP = L-valyl-tRNA(Val) + AMP + diphosphate. Its function is as follows. Catalyzes the attachment of valine to tRNA(Val). As ValRS can inadvertently accommodate and process structurally similar amino acids such as threonine, to avoid such errors, it has a 'posttransfer' editing activity that hydrolyzes mischarged Thr-tRNA(Val) in a tRNA-dependent manner. This Syntrophotalea carbinolica (strain DSM 2380 / NBRC 103641 / GraBd1) (Pelobacter carbinolicus) protein is Valine--tRNA ligase.